A 236-amino-acid chain; its full sequence is Ribonuclease HII (236 aa).

Positions 21–214 (RTVAGVDEVG…LDALPRWQHL (194 aa)) constitute an RNase H type-2 domain. Positions 27, 28, and 119 each coordinate a divalent metal cation.

This sequence belongs to the RNase HII family. The cofactor is Mn(2+). It depends on Mg(2+) as a cofactor.

It localises to the cytoplasm. The enzyme catalyses Endonucleolytic cleavage to 5'-phosphomonoester.. Endonuclease that specifically degrades the RNA of RNA-DNA hybrids. The protein is Ribonuclease HII of Streptomyces griseus subsp. griseus (strain JCM 4626 / CBS 651.72 / NBRC 13350 / KCC S-0626 / ISP 5235).